Reading from the N-terminus, the 529-residue chain is Bifunctional purine biosynthesis protein PurH (529 aa).

Residues 2–149 (TDLVPLRRAL…KNHSFVTVLT (148 aa)) enclose the MGS-like domain.

The protein belongs to the PurH family.

The enzyme catalyses (6R)-10-formyltetrahydrofolate + 5-amino-1-(5-phospho-beta-D-ribosyl)imidazole-4-carboxamide = 5-formamido-1-(5-phospho-D-ribosyl)imidazole-4-carboxamide + (6S)-5,6,7,8-tetrahydrofolate. It carries out the reaction IMP + H2O = 5-formamido-1-(5-phospho-D-ribosyl)imidazole-4-carboxamide. It participates in purine metabolism; IMP biosynthesis via de novo pathway; 5-formamido-1-(5-phospho-D-ribosyl)imidazole-4-carboxamide from 5-amino-1-(5-phospho-D-ribosyl)imidazole-4-carboxamide (10-formyl THF route): step 1/1. Its pathway is purine metabolism; IMP biosynthesis via de novo pathway; IMP from 5-formamido-1-(5-phospho-D-ribosyl)imidazole-4-carboxamide: step 1/1. The protein is Bifunctional purine biosynthesis protein PurH of Dinoroseobacter shibae (strain DSM 16493 / NCIMB 14021 / DFL 12).